The following is a 441-amino-acid chain: Amino-acid acetyltransferase (441 aa).

In terms of domain architecture, N-acetyltransferase spans 295–434; that stretch reads EKVRGAGIDD…KALYNFQRRS (140 aa).

This sequence belongs to the acetyltransferase family. ArgA subfamily.

It localises to the cytoplasm. It catalyses the reaction L-glutamate + acetyl-CoA = N-acetyl-L-glutamate + CoA + H(+). The protein operates within amino-acid biosynthesis; L-arginine biosynthesis; N(2)-acetyl-L-ornithine from L-glutamate: step 1/4. This chain is Amino-acid acetyltransferase, found in Photobacterium profundum (strain SS9).